Here is a 181-residue protein sequence, read N- to C-terminus: Large ribosomal subunit protein uL6 (181 aa).

Belongs to the universal ribosomal protein uL6 family. In terms of assembly, part of the 50S ribosomal subunit.

This protein binds to the 23S rRNA, and is important in its secondary structure. It is located near the subunit interface in the base of the L7/L12 stalk, and near the tRNA binding site of the peptidyltransferase center. This Saccharolobus solfataricus (strain ATCC 35092 / DSM 1617 / JCM 11322 / P2) (Sulfolobus solfataricus) protein is Large ribosomal subunit protein uL6.